Here is a 145-residue protein sequence, read N- to C-terminus: Large ribosomal subunit protein bL9 (145 aa).

The protein belongs to the bacterial ribosomal protein bL9 family.

Its function is as follows. Binds to the 23S rRNA. The sequence is that of Large ribosomal subunit protein bL9 from Ureaplasma parvum serovar 3 (strain ATCC 700970).